We begin with the raw amino-acid sequence, 146 residues long: Late protein OPG112 (146 aa).

A helical membrane pass occupies residues 10 to 32 (LAMTAFFGELNTLDIMALIMSIF).

It belongs to the orthopoxvirus OPG112 family.

Its subcellular location is the host membrane. It is found in the host cytoplasm. Its function is as follows. Contributes to the formation of crescents and immature virions (IV). Interacts with phosphatidylinositol-3-phosphate (PI3P) and phosphatidylinositol-4-phosphate (PI4P) lipids in order to form virion membranes. Mechanistically, mediates proper formation of OPG125-hexamers, and hence the honey comb lattice and spherical immature virus. This chain is Late protein OPG112 (OPG112), found in Homo sapiens (Human).